We begin with the raw amino-acid sequence, 49 residues long: Unknown protein from spot 75 of 2D-PAGE of etiolated coleoptile (49 aa).

The polypeptide is Unknown protein from spot 75 of 2D-PAGE of etiolated coleoptile (Zea mays (Maize)).